The sequence spans 218 residues: Protein P9 (218 aa).

Its subcellular location is the virion membrane. In Pseudoalteromonas espejiana (Bacteriophage PM2), this protein is Protein P9 (IX).